The following is a 127-amino-acid chain: MPTINQLVRKERKKVLEKSKSPALKNCPQRRGVCTRVYTTTPKKPNSALRKVAKVRLTSGFEVISYIGGEGHNLQEHSIVLVRGGRVKDLPGVKYHIVRGALDTAGVAKRTVSRSKYGAKRPKAAAK.

Asp89 carries the 3-methylthioaspartic acid modification.

Belongs to the universal ribosomal protein uS12 family. Part of the 30S ribosomal subunit. Contacts proteins S8 and S17. May interact with IF1 in the 30S initiation complex.

Its function is as follows. With S4 and S5 plays an important role in translational accuracy. In terms of biological role, interacts with and stabilizes bases of the 16S rRNA that are involved in tRNA selection in the A site and with the mRNA backbone. Located at the interface of the 30S and 50S subunits, it traverses the body of the 30S subunit contacting proteins on the other side and probably holding the rRNA structure together. The combined cluster of proteins S8, S12 and S17 appears to hold together the shoulder and platform of the 30S subunit. The sequence is that of Small ribosomal subunit protein uS12 from Campylobacter lari (strain RM2100 / D67 / ATCC BAA-1060).